The following is a 669-amino-acid chain: DNA ligase (669 aa).

NAD(+)-binding positions include 34–38 (DAEYD), 83–84 (SL), and Glu-114. Lys-116 (N6-AMP-lysine intermediate) is an active-site residue. NAD(+) contacts are provided by Arg-137, Glu-171, Lys-287, and Lys-311. Zn(2+) is bound by residues Cys-405, Cys-408, Cys-423, and Cys-428. The region spanning 591–669 (NVESYFAGKT…EERFLQELNK (79 aa)) is the BRCT domain.

It belongs to the NAD-dependent DNA ligase family. LigA subfamily. Mg(2+) is required as a cofactor. The cofactor is Mn(2+).

The enzyme catalyses NAD(+) + (deoxyribonucleotide)n-3'-hydroxyl + 5'-phospho-(deoxyribonucleotide)m = (deoxyribonucleotide)n+m + AMP + beta-nicotinamide D-nucleotide.. DNA ligase that catalyzes the formation of phosphodiester linkages between 5'-phosphoryl and 3'-hydroxyl groups in double-stranded DNA using NAD as a coenzyme and as the energy source for the reaction. It is essential for DNA replication and repair of damaged DNA. The protein is DNA ligase of Bacillus cereus (strain ATCC 10987 / NRS 248).